The chain runs to 102 residues: Large ribosomal subunit protein bL21 (102 aa).

This sequence belongs to the bacterial ribosomal protein bL21 family. Part of the 50S ribosomal subunit. Contacts protein L20.

Its function is as follows. This protein binds to 23S rRNA in the presence of protein L20. The sequence is that of Large ribosomal subunit protein bL21 from Oleidesulfovibrio alaskensis (strain ATCC BAA-1058 / DSM 17464 / G20) (Desulfovibrio alaskensis).